Here is a 250-residue protein sequence, read N- to C-terminus: Non-specific acid phosphatase (250 aa).

Residues 1 to 20 form the signal peptide; that stretch reads MKSRYLVFFLPLIVAKYTSA.

The protein belongs to the class A bacterial acid phosphatase family. As to quaternary structure, homodimer.

The protein localises to the periplasm. It catalyses the reaction a phosphate monoester + H2O = an alcohol + phosphate. In Salmonella typhimurium (strain LT2 / SGSC1412 / ATCC 700720), this protein is Non-specific acid phosphatase (phoN).